A 225-amino-acid polypeptide reads, in one-letter code: Ribosomal RNA small subunit methyltransferase G (225 aa).

Residues glycine 71, leucine 76, 121–122 (AE), and arginine 139 contribute to the S-adenosyl-L-methionine site. Positions 204–225 (VVEARRATPSNGRGRPGRSSRR) are disordered.

This sequence belongs to the methyltransferase superfamily. RNA methyltransferase RsmG family.

It is found in the cytoplasm. In terms of biological role, specifically methylates the N7 position of guanine in position 518 of 16S rRNA. This is Ribosomal RNA small subunit methyltransferase G from Mycobacterium sp. (strain KMS).